A 456-amino-acid chain; its full sequence is tRNA-2-methylthio-N(6)-dimethylallyladenosine synthase (456 aa).

The 119-residue stretch at 19–137 (KHFFIETWGC…FPEYLHRVQV (119 aa)) folds into the MTTase N-terminal domain. Residues C28, C64, C98, C174, C178, and C181 each coordinate [4Fe-4S] cluster. A Radical SAM core domain is found at 160-392 (RKSNVKAFVT…AVNEGIVVGN (233 aa)). A TRAM domain is found at 393 to 456 (KAAEGKIYEV…SFSLVGEVVE (64 aa)).

This sequence belongs to the methylthiotransferase family. MiaB subfamily. In terms of assembly, monomer. Requires [4Fe-4S] cluster as cofactor.

The protein localises to the cytoplasm. It carries out the reaction N(6)-dimethylallyladenosine(37) in tRNA + (sulfur carrier)-SH + AH2 + 2 S-adenosyl-L-methionine = 2-methylsulfanyl-N(6)-dimethylallyladenosine(37) in tRNA + (sulfur carrier)-H + 5'-deoxyadenosine + L-methionine + A + S-adenosyl-L-homocysteine + 2 H(+). Its function is as follows. Catalyzes the methylthiolation of N6-(dimethylallyl)adenosine (i(6)A), leading to the formation of 2-methylthio-N6-(dimethylallyl)adenosine (ms(2)i(6)A) at position 37 in tRNAs that read codons beginning with uridine. The chain is tRNA-2-methylthio-N(6)-dimethylallyladenosine synthase from Clostridium botulinum (strain Eklund 17B / Type B).